The primary structure comprises 479 residues: Cardiolipin synthase A (479 aa).

A run of 2 helical transmembrane segments spans residues 8–28 (FFGY…LHAV) and 38–58 (IAWA…YLVF). PLD phosphodiesterase domains follow at residues 218-245 (VNFR…GDEY) and 392-419 (QPGF…DNRS). Active-site residues include His223, Lys225, Asp230, His397, Lys399, and Asp404.

The protein belongs to the phospholipase D family. Cardiolipin synthase subfamily. ClsA sub-subfamily.

The protein resides in the cell inner membrane. The enzyme catalyses 2 a 1,2-diacyl-sn-glycero-3-phospho-(1'-sn-glycerol) = a cardiolipin + glycerol. Functionally, catalyzes the reversible phosphatidyl group transfer from one phosphatidylglycerol molecule to another to form cardiolipin (CL) (diphosphatidylglycerol) and glycerol. In Pseudomonas putida (strain GB-1), this protein is Cardiolipin synthase A.